Here is a 204-residue protein sequence, read N- to C-terminus: 3-isopropylmalate dehydratase small subunit (204 aa).

It belongs to the LeuD family. LeuD type 1 subfamily. In terms of assembly, heterodimer of LeuC and LeuD.

It catalyses the reaction (2R,3S)-3-isopropylmalate = (2S)-2-isopropylmalate. It functions in the pathway amino-acid biosynthesis; L-leucine biosynthesis; L-leucine from 3-methyl-2-oxobutanoate: step 2/4. Catalyzes the isomerization between 2-isopropylmalate and 3-isopropylmalate, via the formation of 2-isopropylmaleate. The protein is 3-isopropylmalate dehydratase small subunit of Roseiflexus sp. (strain RS-1).